A 21-amino-acid polypeptide reads, in one-letter code: Fibrinogen beta chain (21 aa).

The residue at position 1 (Gln-1) is a Pyrrolidone carboxylic acid. The segment covering 1-11 has biased composition (acidic residues); it reads QHSTDYDEVED. Residues 1–21 are disordered; the sequence is QHSTDYDEVEDDRAKLHLDAR. O-linked (GalNAc...) threonine glycosylation is present at Thr-4. Residue Tyr-6 is modified to Sulfotyrosine. Over residues 12 to 21 the composition is skewed to basic and acidic residues; sequence DRAKLHLDAR.

In terms of assembly, heterohexamer; disulfide linked. Contains 2 sets of 3 non-identical chains (alpha, beta and gamma). The 2 heterotrimers are in head to head conformation with the N-termini in a small central domain. Conversion of fibrinogen to fibrin is triggered by thrombin, which cleaves fibrinopeptides A and B from alpha and beta chains, and thus exposes the N-terminal polymerization sites responsible for the formation of the soft clot.

It is found in the secreted. In terms of biological role, cleaved by the protease thrombin to yield monomers which, together with fibrinogen alpha (FGA) and fibrinogen gamma (FGG), polymerize to form an insoluble fibrin matrix. Fibrin has a major function in hemostasis as one of the primary components of blood clots. In addition, functions during the early stages of wound repair to stabilize the lesion and guide cell migration during re-epithelialization. Was originally thought to be essential for platelet aggregation, based on in vitro studies using anticoagulated blood. However subsequent studies have shown that it is not absolutely required for thrombus formation in vivo. Enhances expression of SELP in activated platelets. Maternal fibrinogen is essential for successful pregnancy. Fibrin deposition is also associated with infection, where it protects against IFNG-mediated hemorrhage. May also facilitate the antibacterial immune response via both innate and T-cell mediated pathways. The chain is Fibrinogen beta chain (FGB) from Muntiacus muntjak (Barking deer).